The sequence spans 247 residues: Chalcone--flavanone isomerase (247 aa).

Substrate is bound by residues Thr-56, Asn-121, and Ser-198. Over residues 223-235 (ENKVEEDATKTDQ) the composition is skewed to basic and acidic residues. The disordered stretch occupies residues 223 to 247 (ENKVEEDATKTDQEEANDLSLAKEN).

Belongs to the chalcone isomerase family.

The enzyme catalyses a chalcone = a flavanone.. It participates in secondary metabolite biosynthesis; flavonoid biosynthesis. Its function is as follows. Catalyzes the intramolecular cyclization of bicyclic chalcones into tricyclic (S)-flavanones. Responsible for the isomerization of 4,2',4',6'-tetrahydroxychalcone (also termed chalcone) into naringenin. This Raphanus sativus (Radish) protein is Chalcone--flavanone isomerase (CHI).